The following is a 230-amino-acid chain: tRNA (guanine-N(1)-)-methyltransferase (230 aa).

S-adenosyl-L-methionine contacts are provided by residues Gly114 and 138 to 143 (IGDYVL).

Belongs to the RNA methyltransferase TrmD family. In terms of assembly, homodimer.

It is found in the cytoplasm. The enzyme catalyses guanosine(37) in tRNA + S-adenosyl-L-methionine = N(1)-methylguanosine(37) in tRNA + S-adenosyl-L-homocysteine + H(+). Specifically methylates guanosine-37 in various tRNAs. The chain is tRNA (guanine-N(1)-)-methyltransferase from Rhodococcus jostii (strain RHA1).